The chain runs to 662 residues: Methionine--tRNA ligase (662 aa).

Residues 13 to 23 carry the 'HIGH' region motif; sequence PYTNGPCHLGH. Zn(2+) is bound by residues C144, C147, C156, and C160. Residues 326-330 carry the 'KMSKS' region motif; the sequence is KFSKS. K329 serves as a coordination point for ATP. The tRNA-binding domain occupies 564–662; that stretch reads DFSKVEIKTG…KPVEPGTKIR (99 aa).

The protein belongs to the class-I aminoacyl-tRNA synthetase family. MetG type 1 subfamily. In terms of assembly, homodimer. Zn(2+) serves as cofactor.

The protein resides in the cytoplasm. The catalysed reaction is tRNA(Met) + L-methionine + ATP = L-methionyl-tRNA(Met) + AMP + diphosphate. In terms of biological role, is required not only for elongation of protein synthesis but also for the initiation of all mRNA translation through initiator tRNA(fMet) aminoacylation. The protein is Methionine--tRNA ligase of Methanoregula boonei (strain DSM 21154 / JCM 14090 / 6A8).